An 848-amino-acid polypeptide reads, in one-letter code: Adenylate cyclase (848 aa).

The segment at 1–535 (MYLYIETLKQ…DISHHFPLRL (535 aa)) is catalytic. Residues 541–848 (KALYSPCEIR…SQPAQQFQLH (308 aa)) form a regulatory region.

It belongs to the adenylyl cyclase class-1 family.

The protein localises to the cytoplasm. The catalysed reaction is ATP = 3',5'-cyclic AMP + diphosphate. Its activity is regulated as follows. The regulatory domain is involved in the regulation of cyclase activity by the carbon source. The polypeptide is Adenylate cyclase (cya) (Yersinia intermedia).